We begin with the raw amino-acid sequence, 320 residues long: Phosphate acyltransferase (320 aa).

Belongs to the PlsX family. In terms of assembly, homodimer. Probably interacts with PlsY.

The protein resides in the cytoplasm. The enzyme catalyses a fatty acyl-[ACP] + phosphate = an acyl phosphate + holo-[ACP]. It functions in the pathway lipid metabolism; phospholipid metabolism. Its function is as follows. Catalyzes the reversible formation of acyl-phosphate (acyl-PO(4)) from acyl-[acyl-carrier-protein] (acyl-ACP). This enzyme utilizes acyl-ACP as fatty acyl donor, but not acyl-CoA. This is Phosphate acyltransferase from Chlamydia pneumoniae (Chlamydophila pneumoniae).